The chain runs to 730 residues: Hemolytic phospholipase C (730 aa).

Residues 1–38 (MTENWKFRRRTFLKHGAQAATLAGLSGLFPETLRRALA) constitute a signal peptide (tat-type signal).

This sequence belongs to the bacterial phospholipase C family. In terms of processing, predicted to be exported by the Tat system. The position of the signal peptide cleavage has not been experimentally proven.

The enzyme catalyses a 1,2-diacyl-sn-glycero-3-phosphocholine + H2O = phosphocholine + a 1,2-diacyl-sn-glycerol + H(+). In terms of biological role, hydrolyzes sphingomyelin in addition to phosphatidylcholine. The polypeptide is Hemolytic phospholipase C (plcH) (Pseudomonas aeruginosa (strain ATCC 15692 / DSM 22644 / CIP 104116 / JCM 14847 / LMG 12228 / 1C / PRS 101 / PAO1)).